A 676-amino-acid polypeptide reads, in one-letter code: UvrABC system protein B (676 aa).

Positions 35–192 constitute a Helicase ATP-binding domain; that stretch reads QGVADGLMYQ…ARLVAMQYTR (158 aa). 48 to 55 lines the ATP pocket; it reads GVTGSGKT. Residues 101 to 124 carry the Beta-hairpin motif; it reads YYDYYQPEAYVPTRDLFIEKDSSV. Positions 439–605 constitute a Helicase C-terminal domain; it reads QVDDLLGEIR…GVNKAVRELI (167 aa). Positions 634–669 constitute a UVR domain; sequence AREIKRLEKLMMDHARNLEFEQAAAARDALTALKNR.

Belongs to the UvrB family. Forms a heterotetramer with UvrA during the search for lesions. Interacts with UvrC in an incision complex.

The protein resides in the cytoplasm. Functionally, the UvrABC repair system catalyzes the recognition and processing of DNA lesions. A damage recognition complex composed of 2 UvrA and 2 UvrB subunits scans DNA for abnormalities. Upon binding of the UvrA(2)B(2) complex to a putative damaged site, the DNA wraps around one UvrB monomer. DNA wrap is dependent on ATP binding by UvrB and probably causes local melting of the DNA helix, facilitating insertion of UvrB beta-hairpin between the DNA strands. Then UvrB probes one DNA strand for the presence of a lesion. If a lesion is found the UvrA subunits dissociate and the UvrB-DNA preincision complex is formed. This complex is subsequently bound by UvrC and the second UvrB is released. If no lesion is found, the DNA wraps around the other UvrB subunit that will check the other stand for damage. This chain is UvrABC system protein B, found in Bordetella avium (strain 197N).